The sequence spans 158 residues: SsrA-binding protein (158 aa).

The interval 134–158 (KLHDKRETEKERDWNRQKSRLLKTG) is disordered. The segment covering 137 to 149 (DKRETEKERDWNR) has biased composition (basic and acidic residues).

Belongs to the SmpB family.

The protein resides in the cytoplasm. Its function is as follows. Required for rescue of stalled ribosomes mediated by trans-translation. Binds to transfer-messenger RNA (tmRNA), required for stable association of tmRNA with ribosomes. tmRNA and SmpB together mimic tRNA shape, replacing the anticodon stem-loop with SmpB. tmRNA is encoded by the ssrA gene; the 2 termini fold to resemble tRNA(Ala) and it encodes a 'tag peptide', a short internal open reading frame. During trans-translation Ala-aminoacylated tmRNA acts like a tRNA, entering the A-site of stalled ribosomes, displacing the stalled mRNA. The ribosome then switches to translate the ORF on the tmRNA; the nascent peptide is terminated with the 'tag peptide' encoded by the tmRNA and targeted for degradation. The ribosome is freed to recommence translation, which seems to be the essential function of trans-translation. The protein is SsrA-binding protein of Allorhizobium ampelinum (strain ATCC BAA-846 / DSM 112012 / S4) (Agrobacterium vitis (strain S4)).